A 3326-amino-acid polypeptide reads, in one-letter code: Deoxyribonuclease CdiA (3326 aa).

Residues 36–342 form a two-partner system transport domain (TPS) region; sequence TADGVLTSGG…ARGALTLTGS (307 aa). The tract at residues 343–1396 is FHA-1; sequence YAGAGSLYSD…ITVRTGTLTN (1054 aa). The receptor binding domain (RBD) stretch occupies residues 1397–1765; it reads QREGLVVTES…QQLGSPSLTD (369 aa). The segment at 1766–1951 is YP domain; it reads YPLPTSQSGL…LAQADKTNLQ (186 aa). Residues 1959-2097 are periplasmic FHA-1 repeat (pFR); that stretch reads SVSLSAGGDI…AGGPLQLAAG (139 aa). Positions 2125–2660 are FHA-2; it reads QGLVQSTVAS…SNRYDSKQTS (536 aa). Residues 3060–3063 carry the VENN CT cleavage motif motif; the sequence is VENN. The tract at residues 3060 to 3326 is CT domain; sequence VENNSLGDIA…DRNRQIGVIK (267 aa).

The protein in the N-terminal section; belongs to the CdiA toxin family. As to quaternary structure, the C-terminal (CT) domain interacts with cognate CdiI but not non-cognate CdiI from E.coli strain 536 / UPEC.

Its subcellular location is the target cell. It localises to the target cell cytoplasm. Its function is as follows. Toxic component of a toxin-immunity protein module, which functions as a cellular contact-dependent growth inhibition (CDI) system. CDI modules allow bacteria to communicate with and inhibit the growth of closely related neighboring bacteria in a contact-dependent fashion. CDI is neutralized by its cognate immunity protein CdiI, but not by non-cognate CdiI from other bacteria. The C-terminal domain (CT) has strong DNase activity; this activity is inhibited by cognate CdiI. The CdiA protein is thought to be exported from the cell through the central lumen of CdiB, the other half of its two-partner system (TPS). The TPS domain probably remains associated with CdiB while the FHA-1 domain forms an extended filament with the receptor-binding domain (RBD) at its extremity; in the secretion arrested state the C-terminus of the RBD and YP domains form a hairpin-like structure as the FHA-2, PT and CT domains are periplasmic. The YP domain is probably responsible for this arrest at the point where it re-enters the host cell periplasm. Upon binding to a target cell outer membrane receptor a signal is transmitted to activate secretion. The filament elongates slightly, the rest of CdiA is secreted and the FHA-2 domain becomes stably associated with the target cell's outer membrane where it facilitates entry of the toxic CT domain into the target cell periplasm. From there the toxic CT domain is cleaved and gains access to the target cell cytoplasm via an inner membrane protein. This chain is Deoxyribonuclease CdiA, found in Dickeya dadantii (strain 3937) (Erwinia chrysanthemi (strain 3937)).